The following is a 482-amino-acid chain: UDP-N-acetylmuramoyl-L-alanyl-D-glutamate--2,6-diaminopimelate ligase (482 aa).

Ser29 contacts UDP-N-acetyl-alpha-D-muramoyl-L-alanyl-D-glutamate. 109–115 (GTNGKTS) provides a ligand contact to ATP. UDP-N-acetyl-alpha-D-muramoyl-L-alanyl-D-glutamate-binding positions include 151–152 (TT), Ser178, and Arg186. N6-carboxylysine is present on Lys218. Residues Arg375, 399 to 402 (DNPR), Gly451, and Glu455 contribute to the meso-2,6-diaminopimelate site. The short motif at 399–402 (DNPR) is the Meso-diaminopimelate recognition motif element.

This sequence belongs to the MurCDEF family. MurE subfamily. Mg(2+) serves as cofactor. Post-translationally, carboxylation is probably crucial for Mg(2+) binding and, consequently, for the gamma-phosphate positioning of ATP.

The protein resides in the cytoplasm. It carries out the reaction UDP-N-acetyl-alpha-D-muramoyl-L-alanyl-D-glutamate + meso-2,6-diaminopimelate + ATP = UDP-N-acetyl-alpha-D-muramoyl-L-alanyl-gamma-D-glutamyl-meso-2,6-diaminopimelate + ADP + phosphate + H(+). It functions in the pathway cell wall biogenesis; peptidoglycan biosynthesis. Functionally, catalyzes the addition of meso-diaminopimelic acid to the nucleotide precursor UDP-N-acetylmuramoyl-L-alanyl-D-glutamate (UMAG) in the biosynthesis of bacterial cell-wall peptidoglycan. In Caldanaerobacter subterraneus subsp. tengcongensis (strain DSM 15242 / JCM 11007 / NBRC 100824 / MB4) (Thermoanaerobacter tengcongensis), this protein is UDP-N-acetylmuramoyl-L-alanyl-D-glutamate--2,6-diaminopimelate ligase.